Consider the following 379-residue polypeptide: Oxidoreductase chry3 (379 aa).

Disordered stretches follow at residues 1–23 (MTTATKPHQGRFRYLTRGSQPTP) and 126–150 (EGDDSAPAEEEADTQASSSDDTSHM). The span at 126 to 138 (EGDDSAPAEEEAD) shows a compositional bias: acidic residues.

The protein belongs to the asaB hydroxylase/desaturase family.

It participates in pigment biosynthesis. Functionally, oxidoreductase; part of the gene cluster that mediates the biosynthesis of the yellow pigment chrysogine. Pyruvic acid and anthranilic acid are likely substrates for the nonribosomal peptide synthetase chry1/NRPS14, with pyruvic acid adenylated by the first A domain and anthranilic acid by the second. If pyruvic acid and anthranilic acid are merged and released from chry1/NRPS14 by hydrolysis, a subsequent amidation would lead to 2-pyruvoylaminobenzamide. This process is probably catalyzed by the amidotransferase chry2 using glutamine as amino donor. The dehydrogenase chry5 that has a terminal berberine bridge domain for C-N cyclization could catalyze the cyclization of 2-pyruvoylaminobenzamide to yield acetyl-4(3H)-quinazolidinone. A final reduction of acetyl-4(3H)-quinazolidinone catalyzed by the oxidoreductase chry4 would result in chrysogine. This Gibberella zeae (strain ATCC MYA-4620 / CBS 123657 / FGSC 9075 / NRRL 31084 / PH-1) (Wheat head blight fungus) protein is Oxidoreductase chry3.